The chain runs to 1126 residues: NUT family member 1 (1126 aa).

7 disordered regions span residues 1–56 (MASD…PVFS), 334–367 (IPKK…IPPE), 475–515 (EDAQ…QGAA), 537–559 (QEQT…SPSS), 664–692 (AGML…DDRG), 755–810 (ALNS…GPGL), and 932–1014 (GEGR…EELS). The segment covering 30–55 (FAPPPPVPPDQPLWEPSPQPPIPPVF) has biased composition (pro residues). The segment covering 338 to 353 (AASKTRAPRRRQRKPQ) has biased composition (basic residues). Positions 962-975 (KLTNGQGQGSTSPR) are enriched in polar residues. Position 973 is a phosphoserine (Ser-973). The segment covering 987-1005 (TPIKEKCTSADRAKRRETE) has biased composition (basic and acidic residues). Residues Ser-1022, Ser-1025, and Ser-1027 each carry the phosphoserine modification. The segment at 1032-1126 (PLSTRQASGG…SKRKKRRRSQ (95 aa)) is disordered. Gln-1042 is subject to N5-methylglutamine. Residues 1106-1126 (PRKRRRDGFVTSKRKKRRRSQ) show a composition bias toward basic residues.

It belongs to the NUT family. In terms of processing, methylated at Gln-1042 by N6AMT1. Post-translationally, phosphorylation on Ser-1022, Ser-1025 or Ser-1027 is important for cytoplasmic export.

Its subcellular location is the cytoplasm. The protein resides in the nucleus. Plays a role in the regulation of proliferation. Regulates TERT expression by modulating SP1 binding to TERT promoter binding sites. The polypeptide is NUT family member 1 (Mus musculus (Mouse)).